Reading from the N-terminus, the 72-residue chain is MSLEILDQLEEKIKQAVETIQLLQLEIEELKEKNELSRQTNEQLRSENEHLKTEHHNWQERLRSLLGRIDNI.

Residues 1–71 (MSLEILDQLE…LRSLLGRIDN (71 aa)) are a coiled coil. The interval 36–56 (LSRQTNEQLRSENEHLKTEHH) is disordered. The span at 44–56 (LRSENEHLKTEHH) shows a compositional bias: basic and acidic residues.

This sequence belongs to the ZapB family. Homodimer. The ends of the coiled-coil dimer bind to each other, forming polymers. Interacts with FtsZ.

The protein localises to the cytoplasm. Functionally, non-essential, abundant cell division factor that is required for proper Z-ring formation. It is recruited early to the divisome by direct interaction with FtsZ, stimulating Z-ring assembly and thereby promoting cell division earlier in the cell cycle. Its recruitment to the Z-ring requires functional FtsA or ZipA. The protein is Cell division protein ZapB of Histophilus somni (strain 129Pt) (Haemophilus somnus).